We begin with the raw amino-acid sequence, 92 residues long: Protein OP-ORF (92 aa).

The stretch at 53-82 forms a coiled coil; that stretch reads KMLAATISILEEEVTELVTELNNTTNLTAK.

This is Protein OP-ORF from Rice dwarf virus (isolate Fujian) (RDV).